Reading from the N-terminus, the 445-residue chain is Protein cereblon (445 aa).

A disordered region spans residues 1-50 (MAAEEGGDGRRNMGNPPPPAPAESEEEDDNEMEVEDQDGKEAEKPNMINF). Acidic residues predominate over residues 23–36 (ESEEEDDNEMEVED). A Lon N-terminal domain is found at 82–321 (IPVLPHVMVM…CELDIMNKCT (240 aa)). The CULT domain occupies 320–428 (CTSLCCKQCQ…LTRSALLPRI (109 aa)). Zn(2+) is bound by residues Cys-325 and Cys-328. 3 residues coordinate (S)-thalidomide: His-380, Trp-382, and Trp-388. Zn(2+) is bound by residues Cys-393 and Cys-396.

This sequence belongs to the CRBN family. In terms of assembly, component of a DCX (DDB1-CUL4-X-box) protein ligase complex. Interacts directly with DDB1.

It is found in the cytoplasm. The protein resides in the nucleus. The protein operates within protein modification; protein ubiquitination. In terms of biological role, substrate recognition component of a DCX (DDB1-CUL4-X-box) E3 protein ligase complex that mediates the ubiquitination and subsequent proteasomal degradation of target proteins, such as MEIS2. Normal degradation of key regulatory proteins is required for normal limb outgrowth and expression of the fibroblast growth factor FGF8. Maintains presynaptic glutamate release and consequently cognitive functions, such as memory and learning, by negatively regulating large-conductance calcium-activated potassium (BK) channels in excitatory neurons. Likely to function by regulating the assembly and neuronal surface expression of BK channels via its interaction with KCNT1. May also be involved in regulating anxiety-like behaviors via a BK channel-independent mechanism. This Gallus gallus (Chicken) protein is Protein cereblon (CRBN).